A 530-amino-acid polypeptide reads, in one-letter code: Cytochrome P450 monooxygenase sttB (530 aa).

The N-linked (GlcNAc...) asparagine glycan is linked to Asn-5. The chain crosses the membrane as a helical span at residues 24–44 (LPILTVALLTGIASAVYINVS). Asn-230 carries N-linked (GlcNAc...) asparagine glycosylation.

Belongs to the cytochrome P450 family. Requires heme as cofactor.

Its subcellular location is the membrane. The enzyme catalyses preaspterpenacid acid I + reduced [NADPH--hemoprotein reductase] + O2 = preaspterpenacid acid II + oxidized [NADPH--hemoprotein reductase] + H2O + H(+). The protein operates within secondary metabolite biosynthesis; terpenoid biosynthesis. Its function is as follows. Cytochrome P450 monooxygenase; part of the gene cluster that mediates the biosynthesis of aspterpenacids. Performs the C22-oxidative modification of the terpene synthase sttA product preaspterpenacid I to produce preaspterpenacid II. It has still to be determined how preaspterpenacid II is further modified to produce aspterpenacids. The chain is Cytochrome P450 monooxygenase sttB from Aspergillus terreus (strain NIH 2624 / FGSC A1156).